A 688-amino-acid chain; its full sequence is MIOREX complex component 1 (688 aa).

Residues 1–24 form a disordered region; it reads MGLKITKGQLRTKDLNQSSSKSSQ. The N-terminal 46 residues, 1–46, are a transit peptide targeting the mitochondrion; it reads MGLKITKGQLRTKDLNQSSSKSSQSSRIGVDTCIFTRMLPRINTAI.

In terms of assembly, associates with the mitochondrial ribosome.

It is found in the mitochondrion. Functionally, component of MIOREX complexes, large expressome-like assemblies of ribosomes with factors involved in all the steps of post-transcriptional gene expression. The protein is MIOREX complex component 1 of Saccharomyces cerevisiae (strain ATCC 204508 / S288c) (Baker's yeast).